A 341-amino-acid polypeptide reads, in one-letter code: Geranylgeranyl transferase type-2 subunit beta (341 aa).

PFTB repeat units lie at residues lysine 15 to asparagine 55, glutamine 62 to aspartate 104, arginine 122 to asparagine 163, alanine 170 to asparagine 211, valine 223 to lysine 264, and leucine 271 to aspartate 313. Geranylgeranyl diphosphate contacts are provided by residues histidine 196–alanine 198 and arginine 243–tryptophan 255. 3 residues coordinate Zn(2+): aspartate 249, cysteine 251, and histidine 301.

The protein belongs to the protein prenyltransferase subunit beta family. As to quaternary structure, heterodimer of an alpha and a beta subunit. Zn(2+) serves as cofactor.

The catalysed reaction is geranylgeranyl diphosphate + L-cysteinyl-[protein] = S-geranylgeranyl-L-cysteinyl-[protein] + diphosphate. Functionally, catalyzes the transfer of a geranyl-geranyl moiety from geranyl-geranyl pyrophosphate to proteins having the C-terminal -XCC or -XCXC, where both cysteines may become modified. Acts on YPT1 and SEC4. The protein is Geranylgeranyl transferase type-2 subunit beta (BET2) of Candida albicans (Yeast).